The sequence spans 661 residues: Serine/threonine-protein phosphatase rdgC (661 aa).

An IQ domain is found at Arg-7 to Gln-32. Residues Ile-105 to Ser-413 are catalytic. 4 residues coordinate Mn(2+): Asp-158, His-160, Asp-187, and Asn-219. Residue His-220 is the Proton donor of the active site. Mn(2+) is bound by residues His-271 and His-360. EF-hand domains follow at residues Asp-441–Leu-476, Ala-526–His-561, and Tyr-566–His-601. Residues Asp-539, Asp-541, Ser-543, Glu-545, Glu-550, Asp-579, Asn-581, Asp-583, Lys-585, and Glu-590 each contribute to the Ca(2+) site. The disordered stretch occupies residues Gln-606–Thr-625.

The protein belongs to the PPP phosphatase family. It depends on Mn(2+) as a cofactor. As to expression, expressed in the visual system of the fly, as well as in the mushroom bodies of the central brain.

The catalysed reaction is O-phospho-L-seryl-[protein] + H2O = L-seryl-[protein] + phosphate. It carries out the reaction O-phospho-L-threonyl-[protein] + H2O = L-threonyl-[protein] + phosphate. In terms of biological role, phosphatase required to prevent light-induced retinal degeneration. This is Serine/threonine-protein phosphatase rdgC (rdgC) from Drosophila melanogaster (Fruit fly).